The following is a 332-amino-acid chain: GTP 3',8-cyclase (332 aa).

Residues 9 to 220 (RFARKVDYLR…DQVRERIAER (212 aa)) enclose the Radical SAM core domain. R18 contributes to the GTP binding site. Residues C25 and C29 each coordinate [4Fe-4S] cluster. Y31 serves as a coordination point for S-adenosyl-L-methionine. Residue C32 participates in [4Fe-4S] cluster binding. R67 is a binding site for GTP. G71 is an S-adenosyl-L-methionine binding site. Position 98 (T98) interacts with GTP. An S-adenosyl-L-methionine-binding site is contributed by S122. K159 provides a ligand contact to GTP. M193 contacts S-adenosyl-L-methionine. [4Fe-4S] cluster-binding residues include C258 and C261. Position 263–265 (263–265 (RVR)) interacts with GTP. C275 contributes to the [4Fe-4S] cluster binding site.

Belongs to the radical SAM superfamily. MoaA family. As to quaternary structure, monomer and homodimer. It depends on [4Fe-4S] cluster as a cofactor.

The enzyme catalyses GTP + AH2 + S-adenosyl-L-methionine = (8S)-3',8-cyclo-7,8-dihydroguanosine 5'-triphosphate + 5'-deoxyadenosine + L-methionine + A + H(+). Its pathway is cofactor biosynthesis; molybdopterin biosynthesis. In terms of biological role, catalyzes the cyclization of GTP to (8S)-3',8-cyclo-7,8-dihydroguanosine 5'-triphosphate. The chain is GTP 3',8-cyclase from Pseudomonas savastanoi pv. phaseolicola (strain 1448A / Race 6) (Pseudomonas syringae pv. phaseolicola (strain 1448A / Race 6)).